A 311-amino-acid chain; its full sequence is Aspartate carbamoyltransferase catalytic subunit (311 aa).

Carbamoyl phosphate-binding residues include arginine 58 and threonine 59. Lysine 86 provides a ligand contact to L-aspartate. Arginine 108, histidine 136, and glutamine 139 together coordinate carbamoyl phosphate. Arginine 169 and arginine 223 together coordinate L-aspartate. The carbamoyl phosphate site is built by glycine 264 and proline 265.

It belongs to the aspartate/ornithine carbamoyltransferase superfamily. ATCase family. As to quaternary structure, heterododecamer (2C3:3R2) of six catalytic PyrB chains organized as two trimers (C3), and six regulatory PyrI chains organized as three dimers (R2).

It catalyses the reaction carbamoyl phosphate + L-aspartate = N-carbamoyl-L-aspartate + phosphate + H(+). It functions in the pathway pyrimidine metabolism; UMP biosynthesis via de novo pathway; (S)-dihydroorotate from bicarbonate: step 2/3. Catalyzes the condensation of carbamoyl phosphate and aspartate to form carbamoyl aspartate and inorganic phosphate, the committed step in the de novo pyrimidine nucleotide biosynthesis pathway. This chain is Aspartate carbamoyltransferase catalytic subunit, found in Ruegeria pomeroyi (strain ATCC 700808 / DSM 15171 / DSS-3) (Silicibacter pomeroyi).